A 137-amino-acid chain; its full sequence is Small ribosomal subunit protein bS6 (137 aa).

Positions 104–137 (SLVNKANNKPEPKPTKAKKEDVAPEAKEQAQTEA) are disordered. The span at 111–137 (NKPEPKPTKAKKEDVAPEAKEQAQTEA) shows a compositional bias: basic and acidic residues.

This sequence belongs to the bacterial ribosomal protein bS6 family.

Functionally, binds together with bS18 to 16S ribosomal RNA. The chain is Small ribosomal subunit protein bS6 from Helicobacter hepaticus (strain ATCC 51449 / 3B1).